Consider the following 794-residue polypeptide: Protein argonaute-4 (794 aa).

Positions 152–271 constitute a PAZ domain; sequence PIIEFMCEVL…LPLEVCNIVA (120 aa). Residues 442–753 form the Piwi domain; it reads LIVVILPGKT…VAFRARYHLV (312 aa). Residues 758-779 are disordered; the sequence is DSAEGSHVSGQSNGRDPQALAK.

The protein belongs to the argonaute family. Ago subfamily.

It localises to the cytoplasm. The protein resides in the P-body. Required for RNA-mediated gene silencing (RNAi). Binds to short RNAs such as microRNAs (miRNAs) and represses the translation of mRNAs which are complementary to them. Lacks endonuclease activity and does not appear to cleave target mRNAs. The chain is Protein argonaute-4 (AGO4) from Gallus gallus (Chicken).